Reading from the N-terminus, the 493-residue chain is Lysine--tRNA ligase (493 aa).

Glutamate 402 and glutamate 409 together coordinate Mg(2+).

This sequence belongs to the class-II aminoacyl-tRNA synthetase family. Homodimer. Mg(2+) is required as a cofactor.

The protein localises to the cytoplasm. It catalyses the reaction tRNA(Lys) + L-lysine + ATP = L-lysyl-tRNA(Lys) + AMP + diphosphate. This Ureaplasma parvum serovar 3 (strain ATCC 27815 / 27 / NCTC 11736) protein is Lysine--tRNA ligase.